We begin with the raw amino-acid sequence, 294 residues long: Nucleotide-binding protein Smal_0950 (294 aa).

16 to 23 serves as a coordination point for ATP; sequence GLSGSGKS. 69 to 72 provides a ligand contact to GTP; sequence DVRG.

The protein belongs to the RapZ-like family.

Displays ATPase and GTPase activities. This chain is Nucleotide-binding protein Smal_0950, found in Stenotrophomonas maltophilia (strain R551-3).